Reading from the N-terminus, the 258-residue chain is DNA-directed RNA polymerase subunit Rpo3 (258 aa).

This sequence belongs to the archaeal Rpo3/eukaryotic RPB3 RNA polymerase subunit family. In terms of assembly, part of the RNA polymerase complex.

The protein resides in the cytoplasm. It carries out the reaction RNA(n) + a ribonucleoside 5'-triphosphate = RNA(n+1) + diphosphate. DNA-dependent RNA polymerase (RNAP) catalyzes the transcription of DNA into RNA using the four ribonucleoside triphosphates as substrates. The polypeptide is DNA-directed RNA polymerase subunit Rpo3 (Pyrobaculum calidifontis (strain DSM 21063 / JCM 11548 / VA1)).